The chain runs to 153 residues: Ribosomal RNA large subunit methyltransferase H (153 aa).

S-adenosyl-L-methionine-binding positions include Leu-71, Gly-102, and 121-126; that span reads LSRMTL.

This sequence belongs to the RNA methyltransferase RlmH family. In terms of assembly, homodimer.

The protein localises to the cytoplasm. The enzyme catalyses pseudouridine(1915) in 23S rRNA + S-adenosyl-L-methionine = N(3)-methylpseudouridine(1915) in 23S rRNA + S-adenosyl-L-homocysteine + H(+). In terms of biological role, specifically methylates the pseudouridine at position 1915 (m3Psi1915) in 23S rRNA. The protein is Ribosomal RNA large subunit methyltransferase H of Anaeromyxobacter sp. (strain Fw109-5).